Reading from the N-terminus, the 535-residue chain is Dual specificity calcium/calmodulin-dependent 3',5'-cyclic nucleotide phosphodiesterase 1B (535 aa).

Positions 1–21 (MELSPRSPPEMLESDCPSPLE) are disordered. Residues Ser7 and Ser14 each carry the phosphoserine modification. Calmodulin-binding regions lie at residues 27-47 (SKKM…QLEN) and 117-140 (EKPK…MFRR). One can recognise a PDEase domain in the interval 145-502 (VGPTYSTAVH…QKWKERAASG (358 aa)). The active-site Proton donor is the His222. His226, His262, Asp263, and Asp369 together coordinate Zn(2+). A Mg(2+)-binding site is contributed by Asp263. Disordered stretches follow at residues 444–474 (QPLA…GDPN) and 495–535 (WKER…GNLD). A compositionally biased stretch (polar residues) spans 454-463 (KSQPSFQWRQ). Phosphoserine is present on residues Ser465 and Ser513.

The protein belongs to the cyclic nucleotide phosphodiesterase family. PDE1 subfamily. In terms of assembly, homodimer. Zn(2+) is required as a cofactor. The cofactor is Mg(2+).

It localises to the cytoplasm. The protein resides in the cytosol. It catalyses the reaction a nucleoside 3',5'-cyclic phosphate + H2O = a nucleoside 5'-phosphate + H(+). It carries out the reaction 3',5'-cyclic GMP + H2O = GMP + H(+). The catalysed reaction is 3',5'-cyclic AMP + H2O = AMP + H(+). Type I PDE are activated by the binding of calmodulin in the presence of Ca(2+). Its function is as follows. Cyclic nucleotide phosphodiesterase with a dual specificity for the second messengers cAMP and cGMP, which are key regulators of many important physiological processes. Has a preference for cGMP as a substrate. This is Dual specificity calcium/calmodulin-dependent 3',5'-cyclic nucleotide phosphodiesterase 1B from Mus musculus (Mouse).